Consider the following 310-residue polypeptide: 5-oxoprolinase subunit C (310 aa).

This sequence belongs to the PxpC family. As to quaternary structure, forms a complex composed of PxpA, PxpB and PxpC.

The enzyme catalyses 5-oxo-L-proline + ATP + 2 H2O = L-glutamate + ADP + phosphate + H(+). Its function is as follows. Catalyzes the cleavage of 5-oxoproline to form L-glutamate coupled to the hydrolysis of ATP to ADP and inorganic phosphate. The sequence is that of 5-oxoprolinase subunit C from Escherichia coli (strain K12).